Here is a 271-residue protein sequence, read N- to C-terminus: Putative hydro-lyase Mrad2831_3350 (271 aa).

The protein belongs to the D-glutamate cyclase family.

This Methylobacterium radiotolerans (strain ATCC 27329 / DSM 1819 / JCM 2831 / NBRC 15690 / NCIMB 10815 / 0-1) protein is Putative hydro-lyase Mrad2831_3350.